A 331-amino-acid chain; its full sequence is tRNA uridine(34) hydroxylase (331 aa).

One can recognise a Rhodanese domain in the interval 122–218 (KENRCLVLDV…YGQAVGTGKW (97 aa)). The Cysteine persulfide intermediate role is filled by C178.

It belongs to the TrhO family.

The catalysed reaction is uridine(34) in tRNA + AH2 + O2 = 5-hydroxyuridine(34) in tRNA + A + H2O. In terms of biological role, catalyzes oxygen-dependent 5-hydroxyuridine (ho5U) modification at position 34 in tRNAs. The chain is tRNA uridine(34) hydroxylase from Chlamydia caviae (strain ATCC VR-813 / DSM 19441 / 03DC25 / GPIC) (Chlamydophila caviae).